Here is a 1191-residue protein sequence, read N- to C-terminus: Solute carrier family 12 member 2 (1191 aa).

The interval 1–166 (MEPAFPASSA…MSEGSLHSSG (166 aa)) is disordered. At 1–258 (MEPAFPASSA…ADNKGVVKFG (258 aa)) the chain is on the cytoplasmic side. Low complexity-rich tracts occupy residues 13–25 (QSQS…AGQQ), 59–69 (KGQTAAQPAAA), 80–99 (AAAP…AAAA), and 131–141 (SASSAHGGHQP). Residues 142-155 (PSESMNGYPQNGDT) show a composition bias toward polar residues. 3 positions are modified to phosphothreonine; by OXSR1 and STK39: T175, T179, and T184. T189 and T202 each carry phosphothreonine. A discontinuously helical membrane pass occupies residues 259 to 288 (WIKGVLVRCMLNIWGVMLFIRLSWIVGHAG). L269 is a binding site for Na(+). 2 residues coordinate K(+): N270 and I271. W272 lines the Na(+) pocket. 3 residues coordinate chloride: G273, V274, and M275. The chain crosses the membrane as a helical span at residues 289-308 (IGLALLVIGTATVVTTITGL). The Cytoplasmic portion of the chain corresponds to 309 to 339 (STSAITTNGFVRGGGAYYLISRSLGPEFGGA). The helical transmembrane segment at 340 to 367 (IGLIFAFANAVAVAMYVVGFAETVRDLL) threads the bilayer. F344 serves as a coordination point for chloride. Y355 lines the K(+) pocket. Over 368-377 (VEHNALMIDE) the chain is Extracellular. A helical membrane pass occupies residues 378–401 (MSDIRIIGSVTIVVLFGISVAGME). Residues 402-404 (WEA) are Cytoplasmic-facing. A helical membrane pass occupies residues 405–426 (KAQIVLLGILLLAIVNFTVGTF). Residues 427–458 (IPANDKRAKGFFNYRGEIFSENFVPDFRDGED) are Extracellular-facing. A discontinuously helical transmembrane segment spans residues 459 to 476 (FFSVFAIFFPAATGILAG). Residues P468, A469, and T471 each contribute to the K(+) site. Residues P468 and A469 each coordinate chloride. 2 residues coordinate chloride: G472 and I473. Over 477-491 (ANISGDLADPQLAIP) the chain is Cytoplasmic. A helical membrane pass occupies residues 492 to 513 (KGTLLAILITTIVYAGAAVSVG). Residues 514-571 (SCIVREATGNLTDAIIPGTVTNCTNVACKLGFNFSSCATNKCSYGLMNDFQVMSLVSG) are Extracellular-facing. 2 N-linked (GlcNAc...) asparagine glycosylation sites follow: N523 and N535. Residues C536 and C541 are joined by a disulfide bond. Residue N546 is glycosylated (N-linked (GlcNAc...) asparagine). Cysteines 550 and 555 form a disulfide. Residues 572 to 596 (FGPLITAGIFSATLSSALASLVSAP) traverse the membrane as a helical segment. Na(+) contacts are provided by A583, S586, and S587. Over 597-624 (KIFQALCKDNIYPGLHVFSVGYGKNNEP) the chain is Cytoplasmic. 2 helical membrane passes run 625–645 (LRGY…AELN) and 646–664 (VIAP…LINF). Chloride-binding residues include F655 and Y659. At 665–687 (SVFHASLAKSPGWRPAFRFYNMW) the chain is on the cytoplasmic side. The next 2 membrane-spanning stretches (helical) occupy residues 688-705 (ISLI…VINW) and 706-718 (WAAL…VLAL). Residues 719 to 1191 (YIYVTYKKPD…NHQSVLTFYS (473 aa)) are Cytoplasmic-facing. A scissor helix region spans residues 734–751 (STQALTYLNALQHAIRLT). The segment at 929–972 (HSDADSSKPSSKSVSETNSPAVCQDQKDEEDDGKASTQPLLKKE) is disordered. Over residues 935 to 948 (SKPSSKSVSETNSP) the composition is skewed to low complexity. Phosphothreonine is present on T1114.

The protein belongs to the SLC12A transporter family. Homodimer. In terms of processing, phosphorylated at Thr-175, Thr-179 and Thr-184 by OXSR1/OSR1 and STK39/SPAK downstream of WNK kinases (WNK1, WNK2, WNK3 or WNK4), promoting its activity. In terms of tissue distribution, strongly expressed in rectal gland, brain, gill and intestine. Also detected at lower levels in heart, kidney, and testis.

The protein resides in the basolateral cell membrane. The catalysed reaction is K(+)(out) + 2 chloride(out) + Na(+)(out) = K(+)(in) + 2 chloride(in) + Na(+)(in). Its activity is regulated as follows. Activated following phosphorylation by OXSR1/OSR1 and STK39/SPAK. Inhibited by bumetanide. Its function is as follows. Cation-chloride cotransporter which mediates the electroneutral transport of chloride, potassium and/or sodium ions across the membrane. Plays a vital role in the regulation of ionic balance and cell volume. This chain is Solute carrier family 12 member 2 (SLC12A2), found in Squalus acanthias (Spiny dogfish).